We begin with the raw amino-acid sequence, 1196 residues long: Nucleolar protein 6 (1196 aa).

Disordered stretches follow at residues 1–75 and 1140–1196; these read MPGK…VKPP and KREQ…KALK. Residues 22–31 show a composition bias toward basic and acidic residues; it reads HAEDHSDLEH. The segment covering 1165–1174 has biased composition (basic residues); that stretch reads KPKKHRKRKG.

This sequence belongs to the NRAP family. As to quaternary structure, part of the small subunit (SSU) processome, composed of more than 70 proteins and the RNA chaperone small nucleolar RNA (snoRNA) U3.

The protein resides in the nucleus. The protein localises to the nucleolus. It is found in the chromosome. Functionally, part of the small subunit (SSU) processome, first precursor of the small eukaryotic ribosomal subunit. During the assembly of the SSU processome in the nucleolus, many ribosome biogenesis factors, an RNA chaperone and ribosomal proteins associate with the nascent pre-rRNA and work in concert to generate RNA folding, modifications, rearrangements and cleavage as well as targeted degradation of pre-ribosomal RNA by the RNA exosome. This Drosophila sechellia (Fruit fly) protein is Nucleolar protein 6.